An 83-amino-acid chain; its full sequence is Protein YqgD (83 aa).

It belongs to the YqgD family.

The chain is Protein YqgD (yqgD) from Escherichia coli (strain K12).